The primary structure comprises 193 residues: tRNA (cytidine(56)-2'-O)-methyltransferase (193 aa).

S-adenosyl-L-methionine contacts are provided by residues Leu-86 and 115-119 (GGEKV).

The protein belongs to the aTrm56 family. In terms of assembly, homodimer.

It is found in the cytoplasm. It catalyses the reaction cytidine(56) in tRNA + S-adenosyl-L-methionine = 2'-O-methylcytidine(56) in tRNA + S-adenosyl-L-homocysteine + H(+). In terms of biological role, specifically catalyzes the AdoMet-dependent 2'-O-ribose methylation of cytidine at position 56 in tRNAs. The polypeptide is tRNA (cytidine(56)-2'-O)-methyltransferase (Haloquadratum walsbyi (strain DSM 16790 / HBSQ001)).